A 398-amino-acid polypeptide reads, in one-letter code: Succinate--CoA ligase [ADP-forming] subunit beta (398 aa).

An ATP-grasp domain is found at 9–254 (KAVLREFGVP…ETEEDAKEIE (246 aa)). ATP contacts are provided by residues lysine 46, 53 to 55 (GRG), glutamate 109, serine 112, and glutamate 117. The Mg(2+) site is built by asparagine 209 and aspartate 223. Substrate is bound by residues asparagine 274 and 331 to 333 (GIM).

Belongs to the succinate/malate CoA ligase beta subunit family. Heterotetramer of two alpha and two beta subunits. It depends on Mg(2+) as a cofactor.

The enzyme catalyses succinate + ATP + CoA = succinyl-CoA + ADP + phosphate. It carries out the reaction GTP + succinate + CoA = succinyl-CoA + GDP + phosphate. It functions in the pathway carbohydrate metabolism; tricarboxylic acid cycle; succinate from succinyl-CoA (ligase route): step 1/1. Functionally, succinyl-CoA synthetase functions in the citric acid cycle (TCA), coupling the hydrolysis of succinyl-CoA to the synthesis of either ATP or GTP and thus represents the only step of substrate-level phosphorylation in the TCA. The beta subunit provides nucleotide specificity of the enzyme and binds the substrate succinate, while the binding sites for coenzyme A and phosphate are found in the alpha subunit. The polypeptide is Succinate--CoA ligase [ADP-forming] subunit beta (Rhodopseudomonas palustris (strain ATCC BAA-98 / CGA009)).